The primary structure comprises 248 residues: Proteasome subunit alpha (248 aa).

It belongs to the peptidase T1A family. As to quaternary structure, the 20S proteasome core is composed of 14 alpha and 14 beta subunits that assemble into four stacked heptameric rings, resulting in a barrel-shaped structure. The two inner rings, each composed of seven catalytic beta subunits, are sandwiched by two outer rings, each composed of seven alpha subunits. The catalytic chamber with the active sites is on the inside of the barrel. Has a gated structure, the ends of the cylinder being occluded by the N-termini of the alpha-subunits. Is capped by the proteasome-associated ATPase, ARC.

It localises to the cytoplasm. Its pathway is protein degradation; proteasomal Pup-dependent pathway. Its activity is regulated as follows. The formation of the proteasomal ATPase ARC-20S proteasome complex, likely via the docking of the C-termini of ARC into the intersubunit pockets in the alpha-rings, may trigger opening of the gate for substrate entry. Interconversion between the open-gate and close-gate conformations leads to a dynamic regulation of the 20S proteasome proteolysis activity. Component of the proteasome core, a large protease complex with broad specificity involved in protein degradation. The chain is Proteasome subunit alpha from Mycobacterium tuberculosis (strain ATCC 25177 / H37Ra).